The following is a 185-amino-acid chain: Ribosome-recycling factor (185 aa).

It belongs to the RRF family.

The protein localises to the cytoplasm. Functionally, responsible for the release of ribosomes from messenger RNA at the termination of protein biosynthesis. May increase the efficiency of translation by recycling ribosomes from one round of translation to another. This Shewanella amazonensis (strain ATCC BAA-1098 / SB2B) protein is Ribosome-recycling factor.